The following is a 504-amino-acid chain: L-carnitine/gamma-butyrobetaine antiporter (504 aa).

Transmembrane regions (helical) follow at residues 8 to 28, 51 to 71, 92 to 112, 143 to 163, 195 to 215, 231 to 251, 263 to 283, 315 to 335, 347 to 367, 403 to 423, 446 to 466, and 475 to 495; these read AGIE…LCWL, WGWA…WLVF, IFMM…SIEI, GPLP…FFFV, FYLV…TPLV, LDAI…AFGL, TYLS…SFIV, AWTV…SIFL, LCLG…TYSG, LSTA…VTLI, LLVR…LLAL, and AIIA…LSFI.

Belongs to the BCCT transporter (TC 2.A.15) family. CaiT subfamily. As to quaternary structure, homotrimer.

The protein localises to the cell inner membrane. It catalyses the reaction 4-(trimethylamino)butanoate(in) + (R)-carnitine(out) = 4-(trimethylamino)butanoate(out) + (R)-carnitine(in). It participates in amine and polyamine metabolism; carnitine metabolism. Its function is as follows. Catalyzes the exchange of L-carnitine for gamma-butyrobetaine. The polypeptide is L-carnitine/gamma-butyrobetaine antiporter (Proteus sp. (strain LE138)).